We begin with the raw amino-acid sequence, 575 residues long: Probable lysosomal cobalamin transporter (575 aa).

The next 5 helical transmembrane spans lie at 8–28, 46–66, 95–115, 144–164, and 188–208; these read LIWVVYAVVVVVLFAVASVFI, IVAITSLLATILLLPVDVALV, LVYYILYSLDILLCLLVVPFV, YTLSFIAILIILFLVGVFVPI, and ALTFALGLLITIGMYVYALHT. N-linked (GlcNAc...) asparagine glycosylation is present at Asn233. 4 helical membrane passes run 314–334, 376–396, 420–440, and 504–524; these read LVGLILLLLVLLIWVSMILTA, AIFTMLVLLLFFGTVVGIATV, VMTAILMLSILALNYSISMIV, and FGAIFFWSQFAFIGVYLLALI. Residues 537 to 549 show a composition bias toward acidic residues; the sequence is QLDEDAEEAEEEA. A disordered region spans residues 537–556; sequence QLDEDAEEAEEEALLSGSRR.

Belongs to the LIMR family. LMBRD1 subfamily.

It is found in the lysosome membrane. Probable lysosomal cobalamin transporter. Required to export cobalamin from lysosomes allowing its conversion to cofactors. This chain is Probable lysosomal cobalamin transporter, found in Emericella nidulans (strain FGSC A4 / ATCC 38163 / CBS 112.46 / NRRL 194 / M139) (Aspergillus nidulans).